The sequence spans 252 residues: Protein GrpE (252 aa).

The span at 1-22 shows a compositional bias: polar residues; sequence MHNPQSRGHNLSQAMSDQTVTN. The interval 1-70 is disordered; that stretch reads MHNPQSRGHN…EEDQASEATS (70 aa).

The protein belongs to the GrpE family. As to quaternary structure, homodimer.

Its subcellular location is the cytoplasm. Its function is as follows. Participates actively in the response to hyperosmotic and heat shock by preventing the aggregation of stress-denatured proteins, in association with DnaK and GrpE. It is the nucleotide exchange factor for DnaK and may function as a thermosensor. Unfolded proteins bind initially to DnaJ; upon interaction with the DnaJ-bound protein, DnaK hydrolyzes its bound ATP, resulting in the formation of a stable complex. GrpE releases ADP from DnaK; ATP binding to DnaK triggers the release of the substrate protein, thus completing the reaction cycle. Several rounds of ATP-dependent interactions between DnaJ, DnaK and GrpE are required for fully efficient folding. This is Protein GrpE from Thermosynechococcus vestitus (strain NIES-2133 / IAM M-273 / BP-1).